A 257-amino-acid chain; its full sequence is NAD-capped RNA hydrolase NudC (257 aa).

Arginine 69 lines the substrate pocket. Positions 98 and 101 each coordinate Zn(2+). Glutamate 111 serves as a coordination point for substrate. Residues cysteine 116 and cysteine 119 each coordinate Zn(2+). Substrate is bound at residue tyrosine 124. Residues 125–248 (PQIAPCIIVA…TVARRLIEDT (124 aa)) enclose the Nudix hydrolase domain. 3 residues coordinate a divalent metal cation: alanine 158, glutamate 174, and glutamate 178. The short motif at 159 to 180 (GFVEVGETLEQAVAREVMEESG) is the Nudix box element. 192-199 (QPWPFPQS) serves as a coordination point for substrate. Residue glutamate 219 participates in a divalent metal cation binding. Alanine 241 is a binding site for substrate.

Belongs to the Nudix hydrolase family. NudC subfamily. Homodimer. Mg(2+) serves as cofactor. Mn(2+) is required as a cofactor. Requires Zn(2+) as cofactor.

The catalysed reaction is a 5'-end NAD(+)-phospho-ribonucleoside in mRNA + H2O = a 5'-end phospho-adenosine-phospho-ribonucleoside in mRNA + beta-nicotinamide D-ribonucleotide + 2 H(+). The enzyme catalyses NAD(+) + H2O = beta-nicotinamide D-ribonucleotide + AMP + 2 H(+). It catalyses the reaction NADH + H2O = reduced beta-nicotinamide D-ribonucleotide + AMP + 2 H(+). Functionally, mRNA decapping enzyme that specifically removes the nicotinamide adenine dinucleotide (NAD) cap from a subset of mRNAs by hydrolyzing the diphosphate linkage to produce nicotinamide mononucleotide (NMN) and 5' monophosphate mRNA. The NAD-cap is present at the 5'-end of some mRNAs and stabilizes RNA against 5'-processing. Has preference for mRNAs with a 5'-end purine. Catalyzes the hydrolysis of a broad range of dinucleotide pyrophosphates. The sequence is that of NAD-capped RNA hydrolase NudC from Salmonella heidelberg (strain SL476).